A 339-amino-acid polypeptide reads, in one-letter code: UDP-3-O-acylglucosamine N-acyltransferase (339 aa).

The active-site Proton acceptor is His-238.

Belongs to the transferase hexapeptide repeat family. LpxD subfamily. As to quaternary structure, homotrimer.

It carries out the reaction a UDP-3-O-[(3R)-3-hydroxyacyl]-alpha-D-glucosamine + a (3R)-hydroxyacyl-[ACP] = a UDP-2-N,3-O-bis[(3R)-3-hydroxyacyl]-alpha-D-glucosamine + holo-[ACP] + H(+). The protein operates within bacterial outer membrane biogenesis; LPS lipid A biosynthesis. Its function is as follows. Catalyzes the N-acylation of UDP-3-O-acylglucosamine using 3-hydroxyacyl-ACP as the acyl donor. Is involved in the biosynthesis of lipid A, a phosphorylated glycolipid that anchors the lipopolysaccharide to the outer membrane of the cell. In Aeromonas hydrophila subsp. hydrophila (strain ATCC 7966 / DSM 30187 / BCRC 13018 / CCUG 14551 / JCM 1027 / KCTC 2358 / NCIMB 9240 / NCTC 8049), this protein is UDP-3-O-acylglucosamine N-acyltransferase.